Here is a 313-residue protein sequence, read N- to C-terminus: Glucosyl-dolichyl phosphate glucuronosyltransferase (313 aa).

The helical transmembrane segment at Leu-284–Thr-304 threads the bilayer.

The protein belongs to the glycosyltransferase 2 family.

Its subcellular location is the cell membrane. It catalyses the reaction an archaeal dolichyl alpha-D-glucosyl phosphate + UDP-alpha-D-glucuronate = an archaeal dolichyl beta-D-glucuronosyl-(1-&gt;4)-alpha-D-glucosyl phosphate + UDP + H(+). It participates in cell surface structure biogenesis; S-layer biogenesis. Its function is as follows. Involved in the protein N-glycosylation pathway responsible for the assembly and attachment of an N-linked pentasaccharide that decorates the S-layer glycoprotein and flagellins. Catalyzes the transfer of a glucuronate residue (GlcA) to a glucose residue already bound to a dolichol phosphate (DolP), a compound that serves as a glycan lipid carrier in Archaea. In vitro, is able to add GlcA to DolP-Glc in which the omega-position isoprene is not saturated. However, the likely physiological lipid substrate is alpha,omega-saturated. The sequence is that of Glucosyl-dolichyl phosphate glucuronosyltransferase from Haloferax volcanii (strain ATCC 29605 / DSM 3757 / JCM 8879 / NBRC 14742 / NCIMB 2012 / VKM B-1768 / DS2) (Halobacterium volcanii).